The sequence spans 248 residues: Triosephosphate isomerase (248 aa).

Asparagine 9 to lysine 11 is a substrate binding site. The Electrophile role is filled by histidine 94. Glutamate 166 functions as the Proton acceptor in the catalytic mechanism. Substrate contacts are provided by residues glycine 172, serine 212, and glycine 233–glycine 234.

It belongs to the triosephosphate isomerase family. Homodimer.

It localises to the cytoplasm. It carries out the reaction D-glyceraldehyde 3-phosphate = dihydroxyacetone phosphate. It functions in the pathway carbohydrate biosynthesis; gluconeogenesis. Its pathway is carbohydrate degradation; glycolysis; D-glyceraldehyde 3-phosphate from glycerone phosphate: step 1/1. Functionally, involved in the gluconeogenesis. Catalyzes stereospecifically the conversion of dihydroxyacetone phosphate (DHAP) to D-glyceraldehyde-3-phosphate (G3P). The chain is Triosephosphate isomerase from Alkaliphilus oremlandii (strain OhILAs) (Clostridium oremlandii (strain OhILAs)).